Reading from the N-terminus, the 389-residue chain is Large envelope protein (389 aa).

Polar residues-rich tracts occupy residues 1–10 and 85–95; these read MGQNLSTSNP and STNRQTGRQPT. 2 disordered regions span residues 1–54 and 73–106; these read MGQN…AFGL and ILHTVPANPPPASTNRQTGRQPTPLSPPLRDTHP. A lipid anchor (N-myristoyl glycine; by host) is attached at glycine 2. The tract at residues 2-108 is pre-S1; sequence GQNLSTSNPL…PPLRDTHPQA (107 aa). The segment at 2 to 163 is pre-S; sequence GQNLSTSNPL…FSRIGDPVTN (162 aa). At 2–170 the chain is on the virion surface; in external conformation side; sequence GQNLSTSNPL…VTNMENITSG (169 aa). Over 2 to 242 the chain is Intravirion; in internal conformation; that stretch reads GQNLSTSNPL…PGYRWMCLRG (241 aa). A pre-S2 region spans residues 109–163; sequence VQWNSTTFHQTLQDPRVRGLYFPAGGSSSGTVNPVPTTASPLSSIFSRIGDPVTN. A helical transmembrane segment spans residues 171–191; that stretch reads FLGPLLVLQAGFFLLTRILTI. Over 192–242 the chain is Intravirion; in external conformation; that stretch reads PQSLDSWWTSLNFRGGTTVCLGQNSQSPTSNHSPTSCPPTCPGYRWMCLRG. The chain crosses the membrane as a helical span at residues 243–263; sequence FIIFLFILLLCLIFLLVLLEY. Topologically, residues 264–337 are virion surface; the sequence is QGMLHVCPLI…WASVRFSWLS (74 aa). N-linked (GlcNAc...) asparagine; by host glycosylation is present at asparagine 309. Residues 338-358 form a helical membrane-spanning segment; it reads LLVPFVQWFVGLSPTVWLSAI. Residues 359-364 are Intravirion-facing; the sequence is WMMWYW. Residues 365-387 form a helical membrane-spanning segment; it reads GPSLYSILSPFLPLLPIFFCLWV. Over 388 to 389 the chain is Virion surface; it reads YI.

It belongs to the orthohepadnavirus major surface antigen family. As to quaternary structure, li-HBsAg interacts with capsid protein and with HDV Large delta antigen. Isoform M associates with host chaperone CANX through its pre-S2 N glycan. This association may be essential for M proper secretion. Isoform M is N-terminally acetylated by host at a ratio of 90%, and N-glycosylated by host at the pre-S2 region. In terms of processing, myristoylated.

Its subcellular location is the virion membrane. Its function is as follows. The large envelope protein exists in two topological conformations, one which is termed 'external' or Le-HBsAg and the other 'internal' or Li-HBsAg. In its external conformation the protein attaches the virus to cell receptors and thereby initiating infection. This interaction determines the species specificity and liver tropism. This attachment induces virion internalization predominantly through caveolin-mediated endocytosis. The large envelope protein also assures fusion between virion membrane and endosomal membrane. In its internal conformation the protein plays a role in virion morphogenesis and mediates the contact with the nucleocapsid like a matrix protein. In terms of biological role, the middle envelope protein plays an important role in the budding of the virion. It is involved in the induction of budding in a nucleocapsid independent way. In this process the majority of envelope proteins bud to form subviral lipoprotein particles of 22 nm of diameter that do not contain a nucleocapsid. The sequence is that of Large envelope protein from Homo sapiens (Human).